A 340-amino-acid chain; its full sequence is tRNA N6-adenosine threonylcarbamoyltransferase (340 aa).

Residues His111 and His115 each coordinate Fe cation. Substrate contacts are provided by residues 134–138 (LVSGG), Asp167, Gly180, and Asn276. Asp304 serves as a coordination point for Fe cation.

It belongs to the KAE1 / TsaD family. Fe(2+) serves as cofactor.

The protein resides in the cytoplasm. The catalysed reaction is L-threonylcarbamoyladenylate + adenosine(37) in tRNA = N(6)-L-threonylcarbamoyladenosine(37) in tRNA + AMP + H(+). Its function is as follows. Required for the formation of a threonylcarbamoyl group on adenosine at position 37 (t(6)A37) in tRNAs that read codons beginning with adenine. Is involved in the transfer of the threonylcarbamoyl moiety of threonylcarbamoyl-AMP (TC-AMP) to the N6 group of A37, together with TsaE and TsaB. TsaD likely plays a direct catalytic role in this reaction. This chain is tRNA N6-adenosine threonylcarbamoyltransferase, found in Helicobacter pylori (strain Shi470).